The primary structure comprises 174 residues: Peptide methionine sulfoxide reductase MsrA (174 aa).

Cysteine 10 is a catalytic residue.

This sequence belongs to the MsrA Met sulfoxide reductase family.

The enzyme catalyses L-methionyl-[protein] + [thioredoxin]-disulfide + H2O = L-methionyl-(S)-S-oxide-[protein] + [thioredoxin]-dithiol. It catalyses the reaction [thioredoxin]-disulfide + L-methionine + H2O = L-methionine (S)-S-oxide + [thioredoxin]-dithiol. Its function is as follows. Has an important function as a repair enzyme for proteins that have been inactivated by oxidation. Catalyzes the reversible oxidation-reduction of methionine sulfoxide in proteins to methionine. This chain is Peptide methionine sulfoxide reductase MsrA, found in Paenarthrobacter aurescens (strain TC1).